A 129-amino-acid polypeptide reads, in one-letter code: Large ribosomal subunit protein bL20 (129 aa).

The segment covering 1 to 17 has biased composition (basic residues); it reads MARVKRSVNAHKKRRSV. A disordered region spans residues 1–29; it reads MARVKRSVNAHKKRRSVLKASKGYRGQRS.

This sequence belongs to the bacterial ribosomal protein bL20 family.

Its function is as follows. Binds directly to 23S ribosomal RNA and is necessary for the in vitro assembly process of the 50S ribosomal subunit. It is not involved in the protein synthesizing functions of that subunit. The sequence is that of Large ribosomal subunit protein bL20 from Mycobacterium ulcerans (strain Agy99).